A 226-amino-acid chain; its full sequence is Cytidylate kinase (226 aa).

Residue 10–18 (GPASSGKST) participates in ATP binding.

This sequence belongs to the cytidylate kinase family. Type 1 subfamily.

The protein localises to the cytoplasm. It catalyses the reaction CMP + ATP = CDP + ADP. The enzyme catalyses dCMP + ATP = dCDP + ADP. The protein is Cytidylate kinase of Streptococcus thermophilus (strain ATCC BAA-491 / LMD-9).